The chain runs to 562 residues: Arginine--tRNA ligase (562 aa).

Positions 122-132 (PNIAKDMHVGH) match the 'HIGH' region motif.

The protein belongs to the class-I aminoacyl-tRNA synthetase family. In terms of assembly, monomer.

Its subcellular location is the cytoplasm. The catalysed reaction is tRNA(Arg) + L-arginine + ATP = L-arginyl-tRNA(Arg) + AMP + diphosphate. The protein is Arginine--tRNA ligase of Chlamydia abortus (strain DSM 27085 / S26/3) (Chlamydophila abortus).